A 150-amino-acid chain; its full sequence is Transcriptional repressor NrdR (150 aa).

A zinc finger lies at 3–33 (CPYCTGESAVIDTRELDNGETIRRRRRCKHC). The region spanning 48 to 138 (VMVVKKNGDR…VYRSFSDLGK (91 aa)) is the ATP-cone domain.

Belongs to the NrdR family. Requires Zn(2+) as cofactor.

In terms of biological role, negatively regulates transcription of bacterial ribonucleotide reductase nrd genes and operons by binding to NrdR-boxes. The polypeptide is Transcriptional repressor NrdR (Herpetosiphon aurantiacus (strain ATCC 23779 / DSM 785 / 114-95)).